A 679-amino-acid chain; its full sequence is Biosynthetic arginine decarboxylase (679 aa).

A disordered region spans residues 1–43; the sequence is MKHRGQEEMGVESTATSDEVVKVPANGNKLEGKNHKQKKLLPT. Lys149 is modified (N6-(pyridoxal phosphate)lysine). 331 to 341 is a substrate binding site; the sequence is LDVGGGLGVDY.

The protein belongs to the Orn/Lys/Arg decarboxylase class-II family. SpeA subfamily. Requires Mg(2+) as cofactor. Pyridoxal 5'-phosphate serves as cofactor.

The enzyme catalyses L-arginine + H(+) = agmatine + CO2. In terms of biological role, catalyzes the biosynthesis of agmatine from arginine. This Nostoc sp. (strain PCC 7120 / SAG 25.82 / UTEX 2576) protein is Biosynthetic arginine decarboxylase.